We begin with the raw amino-acid sequence, 243 residues long: Probable transcriptional regulatory protein Athe_0816 (243 aa).

This sequence belongs to the TACO1 family.

It localises to the cytoplasm. This chain is Probable transcriptional regulatory protein Athe_0816, found in Caldicellulosiruptor bescii (strain ATCC BAA-1888 / DSM 6725 / KCTC 15123 / Z-1320) (Anaerocellum thermophilum).